We begin with the raw amino-acid sequence, 348 residues long: Phosphate acyltransferase (348 aa).

It belongs to the PlsX family. In terms of assembly, homodimer. Probably interacts with PlsY.

The protein localises to the cytoplasm. It catalyses the reaction a fatty acyl-[ACP] + phosphate = an acyl phosphate + holo-[ACP]. The protein operates within lipid metabolism; phospholipid metabolism. Its function is as follows. Catalyzes the reversible formation of acyl-phosphate (acyl-PO(4)) from acyl-[acyl-carrier-protein] (acyl-ACP). This enzyme utilizes acyl-ACP as fatty acyl donor, but not acyl-CoA. The chain is Phosphate acyltransferase from Rhizobium leguminosarum bv. trifolii (strain WSM2304).